We begin with the raw amino-acid sequence, 71 residues long: Protein Tlp homolog (71 aa).

The interval 30-56 (ETLQNNSLSRDQRQAIMEKNKRREESI) is disordered. Over residues 39 to 56 (RDQRQAIMEKNKRREESI) the composition is skewed to basic and acidic residues.

This sequence belongs to the Tlp family.

The sequence is that of Protein Tlp homolog from Desulforamulus reducens (strain ATCC BAA-1160 / DSM 100696 / MI-1) (Desulfotomaculum reducens).